The following is a 484-amino-acid chain: ATP synthase subunit beta (484 aa).

162 to 169 (GGAGVGKT) provides a ligand contact to ATP.

It belongs to the ATPase alpha/beta chains family. In terms of assembly, F-type ATPases have 2 components, CF(1) - the catalytic core - and CF(0) - the membrane proton channel. CF(1) has five subunits: alpha(3), beta(3), gamma(1), delta(1), epsilon(1). CF(0) has four main subunits: a(1), b(1), b'(1) and c(9-12).

Its subcellular location is the cellular thylakoid membrane. The catalysed reaction is ATP + H2O + 4 H(+)(in) = ADP + phosphate + 5 H(+)(out). In terms of biological role, produces ATP from ADP in the presence of a proton gradient across the membrane. The catalytic sites are hosted primarily by the beta subunits. The protein is ATP synthase subunit beta of Trichodesmium erythraeum (strain IMS101).